Consider the following 451-residue polypeptide: Tapasin-related protein (451 aa).

The N-terminal stretch at 1 to 20 is a signal peptide; the sequence is MGLEPSWYLLLCLAVSGAAG. The Lumenal segment spans residues 21–412; it reads TDPPTAPTTA…RVLPNPEQRG (392 aa). The Ig-like V-type domain occupies 196 to 301; it reads FQVTSETQTL…TSLYQAQQIM (106 aa). 2 disulfides stabilise this stretch: cysteine 217-cysteine 288 and cysteine 326-cysteine 387. N-linked (GlcNAc...) asparagine glycans are attached at residues asparagine 270 and asparagine 277. The region spanning 302–399 is the Ig-like C1-type domain; sequence PLNILAPPKI…AHVSLEEPLT (98 aa). Residues 413-433 form a helical membrane-spanning segment; that stretch reads TLGVIFASIIFLSALLLFLGL. Residues 434-451 are Cytoplasmic-facing; sequence HRQQASSSRSTRPMRHSG.

Interacts with peptide-free HLA-A*02-B2M complexes or those loaded with low affinity peptides, likely facilitating peptide exchange onto higher affinity peptides. Interacts with MR1 in a ligand-independent way; this interaction may stabilize MR1 pool and facilitate ligand loading and dissociation. Widely expressed.

The protein resides in the cell membrane. It localises to the endoplasmic reticulum membrane. Its subcellular location is the microsome membrane. It is found in the golgi apparatus membrane. Its function is as follows. Component of the antigen processing and presentation pathway, which binds to MHC class I coupled with beta2-microglobulin/B2M. Association between TAPBPR and MHC class I occurs in the absence of a functional peptide-loading complex (PLC). Expression seems to slow down and down-regulate MHC class I surface expression. The sequence is that of Tapasin-related protein (Tapbpl) from Mus musculus (Mouse).